We begin with the raw amino-acid sequence, 182 residues long: Gas vesicle protein H1 (182 aa).

The segment covering 1-11 (MVPDENDDASD) has biased composition (acidic residues). Disordered regions lie at residues 1 to 21 (MVPD…SGLL) and 65 to 106 (GRAD…GGTS). Residues 12-21 (DQSSQLSGLL) are compositionally biased toward low complexity. The segment covering 92–101 (TTEDSIHVET) has biased composition (basic and acidic residues).

This sequence belongs to the gas vesicle GvpH family. As to quaternary structure, gvpF to GvpM interact with each other in vitro, and may form multi-subunit complex(es). Interacts with GvpC1. Might interact with GvpA1.

It localises to the cytoplasm. The protein resides in the gas vesicle. Functionally, proteins GvpF to GvpM might be involved in nucleating gas vesicle formation. May be important for the stability of gas vesicles. Gas vesicles are hollow, gas filled proteinaceous nanostructures found in several microbial planktonic microorganisms. They allow positioning of halobacteria at the optimal depth for growth in the poorly aerated, shallow brine pools of their habitat. Its function is as follows. Expression of a 9.5 kb p-vac DNA fragment containing 2 divergently transcribed regions (gvpD-gvpE-gvpF-gvpG-gvpH-gvpI-gvpJ-gvpK-gvpL-gvpM and gvpA-gvpC-gvpN-gvpO) allows H.volcanii to produce gas vesicles. A similar region restores gas vesicle production in H.halobium without the p-vac locus, but it still has the c-vac locus. This chain is Gas vesicle protein H1 (gvpH11), found in Halobacterium salinarum (strain ATCC 700922 / JCM 11081 / NRC-1) (Halobacterium halobium).